The chain runs to 553 residues: Hydroxylamine reductase (553 aa).

Positions 3, 6, 18, and 25 each coordinate [2Fe-2S] cluster. 8 residues coordinate hybrid [4Fe-2O-2S] cluster: histidine 252, glutamate 276, cysteine 320, cysteine 408, cysteine 436, cysteine 461, glutamate 495, and lysine 497. A Cysteine persulfide modification is found at cysteine 408.

The protein belongs to the HCP family. [2Fe-2S] cluster is required as a cofactor. Requires hybrid [4Fe-2O-2S] cluster as cofactor.

It is found in the cytoplasm. It catalyses the reaction A + NH4(+) + H2O = hydroxylamine + AH2 + H(+). In terms of biological role, catalyzes the reduction of hydroxylamine to form NH(3) and H(2)O. The polypeptide is Hydroxylamine reductase (Aliivibrio fischeri (strain ATCC 700601 / ES114) (Vibrio fischeri)).